The following is a 309-amino-acid chain: MELKNDTQISKFILLGISEDPLWQPFLFGLFLFMYLVTLLGNLLIIIATITDSHLHTPMYFFLSNLSFADICFTSASIPKMLVNIQTKNKVITYEGCISQVFFFILFGVLDNFLLAVMAYDRYVAICHPLHYMVIMNCRLCGFLVLGSWVTTALNSLLQSSMALRLSFCTDLKIPHFVCELNQLVLLACNDTFPNDMVMYFAAILLGGGPLAGILYSYSKIVSSIRAISSSQGKYKAFSTCASHLSVVSLFYSTLLGVYLSSSFTQNSHSTARASVMYSVVTPMLNPFIYSLRNKDLMGALRRLLRRKS.

The Extracellular segment spans residues 1-26 (MELKNDTQISKFILLGISEDPLWQPF). The N-linked (GlcNAc...) asparagine glycan is linked to Asn-5. Residues 27–47 (LFGLFLFMYLVTLLGNLLIII) form a helical membrane-spanning segment. Residues 48–57 (ATITDSHLHT) lie on the Cytoplasmic side of the membrane. A helical membrane pass occupies residues 58-78 (PMYFFLSNLSFADICFTSASI). Residues 79-97 (PKMLVNIQTKNKVITYEGC) are Extracellular-facing. Cysteines 97 and 179 form a disulfide. The chain crosses the membrane as a helical span at residues 98 to 118 (ISQVFFFILFGVLDNFLLAVM). The Cytoplasmic segment spans residues 119–139 (AYDRYVAICHPLHYMVIMNCR). Residues 140-160 (LCGFLVLGSWVTTALNSLLQS) traverse the membrane as a helical segment. The Extracellular portion of the chain corresponds to 161–196 (SMALRLSFCTDLKIPHFVCELNQLVLLACNDTFPND). A helical membrane pass occupies residues 197 to 217 (MVMYFAAILLGGGPLAGILYS). Over 218–244 (YSKIVSSIRAISSSQGKYKAFSTCASH) the chain is Cytoplasmic. A helical transmembrane segment spans residues 245 to 265 (LSVVSLFYSTLLGVYLSSSFT). Residues 266–269 (QNSH) lie on the Extracellular side of the membrane. A helical transmembrane segment spans residues 270 to 292 (STARASVMYSVVTPMLNPFIYSL). Over 293–309 (RNKDLMGALRRLLRRKS) the chain is Cytoplasmic.

The protein belongs to the G-protein coupled receptor 1 family.

It localises to the cell membrane. Functionally, odorant receptor. In Mus musculus (Mouse), this protein is Olfactory receptor 7A40.